A 216-amino-acid chain; its full sequence is Peptide deformylase 1 (216 aa).

Fe cation contacts are provided by Cys135 and His177. Glu178 is an active-site residue. Fe cation is bound at residue His181.

It belongs to the polypeptide deformylase family. Requires Fe(2+) as cofactor.

It catalyses the reaction N-terminal N-formyl-L-methionyl-[peptide] + H2O = N-terminal L-methionyl-[peptide] + formate. In terms of biological role, removes the formyl group from the N-terminal Met of newly synthesized proteins. Requires at least a dipeptide for an efficient rate of reaction. N-terminal L-methionine is a prerequisite for activity but the enzyme has broad specificity at other positions. This is Peptide deformylase 1 from Streptomyces avermitilis (strain ATCC 31267 / DSM 46492 / JCM 5070 / NBRC 14893 / NCIMB 12804 / NRRL 8165 / MA-4680).